A 285-amino-acid polypeptide reads, in one-letter code: Heme oxygenase 3, chloroplastic (285 aa).

The transit peptide at 1–58 (MATTRLNPSCHFPASTRLSCESYLGLRTTGRISYARTLTAPRGYLAVKANGGQASVVT) directs the protein to the chloroplast. A heme b-binding site is contributed by His89. Over residues 89-105 (HTKDQAREGEKESRSPE) the composition is skewed to basic and acidic residues. Positions 89–109 (HTKDQAREGEKESRSPEEGPV) are disordered.

It belongs to the heme oxygenase family. As to expression, widely expressed at low levels.

The protein resides in the plastid. Its subcellular location is the chloroplast. The enzyme catalyses heme b + 3 reduced [NADPH--hemoprotein reductase] + 3 O2 = biliverdin IXalpha + CO + Fe(2+) + 3 oxidized [NADPH--hemoprotein reductase] + 3 H2O + H(+). Its function is as follows. Catalyzes the opening of the heme ring to form the open-chain tetrapyrrole biliverdin IX with the release of iron and carbon monoxide (CO). Produces specifically the biliverdin IX-alpha isomer. Plays a minor role in phytochrome assembly and photomorphogenesis. The protein is Heme oxygenase 3, chloroplastic (HO3) of Arabidopsis thaliana (Mouse-ear cress).